A 236-amino-acid chain; its full sequence is LexA repressor (236 aa).

Residues 1-25 (MNDSNDTSVAGGAAGADSRVLSADS) form a disordered region. The segment at residues 51–71 (IREIGDAVGLTSTSSVAHQLR) is a DNA-binding region (H-T-H motif). Active-site for autocatalytic cleavage activity residues include Ser160 and Lys197.

It belongs to the peptidase S24 family. Homodimer.

It catalyses the reaction Hydrolysis of Ala-|-Gly bond in repressor LexA.. Its function is as follows. Represses a number of genes involved in the response to DNA damage (SOS response), including recA and lexA. In the presence of single-stranded DNA, RecA interacts with LexA causing an autocatalytic cleavage which disrupts the DNA-binding part of LexA, leading to derepression of the SOS regulon and eventually DNA repair. In Mycobacterium tuberculosis (strain ATCC 25177 / H37Ra), this protein is LexA repressor.